Reading from the N-terminus, the 234-residue chain is Sugar fermentation stimulation protein homolog (234 aa).

This sequence belongs to the SfsA family.

The chain is Sugar fermentation stimulation protein homolog from Shewanella loihica (strain ATCC BAA-1088 / PV-4).